The following is a 313-amino-acid chain: tRNA dimethylallyltransferase (313 aa).

An ATP-binding site is contributed by 11–18; it reads GPTAAGKS. Substrate is bound at residue 13–18; the sequence is TAAGKS. Interaction with substrate tRNA regions lie at residues 36-39, 160-164, and 244-249; these read DSAT, QRIQR, and RCVGYR.

This sequence belongs to the IPP transferase family. As to quaternary structure, monomer. Requires Mg(2+) as cofactor.

The catalysed reaction is adenosine(37) in tRNA + dimethylallyl diphosphate = N(6)-dimethylallyladenosine(37) in tRNA + diphosphate. Its function is as follows. Catalyzes the transfer of a dimethylallyl group onto the adenine at position 37 in tRNAs that read codons beginning with uridine, leading to the formation of N6-(dimethylallyl)adenosine (i(6)A). This chain is tRNA dimethylallyltransferase, found in Bordetella pertussis (strain Tohama I / ATCC BAA-589 / NCTC 13251).